Reading from the N-terminus, the 124-residue chain is Fluoride-specific ion channel FluC (124 aa).

4 helical membrane-spanning segments follow: residues 2–22 (LNIA…RWLI), 35–55 (TGTL…IAWF), 71–91 (TGFC…VALF), and 100–120 (LGTM…AFWL). Na(+)-binding residues include G75 and T78.

Belongs to the fluoride channel Fluc/FEX (TC 1.A.43) family.

The protein localises to the cell inner membrane. It carries out the reaction fluoride(in) = fluoride(out). With respect to regulation, na(+) is not transported, but it plays an essential structural role and its presence is essential for fluoride channel function. In terms of biological role, fluoride-specific ion channel. Important for reducing fluoride concentration in the cell, thus reducing its toxicity. The polypeptide is Fluoride-specific ion channel FluC (Proteus mirabilis (strain HI4320)).